Consider the following 103-residue polypeptide: Large ribosomal subunit protein bL21 (103 aa).

Belongs to the bacterial ribosomal protein bL21 family. As to quaternary structure, part of the 50S ribosomal subunit. Contacts protein L20.

Its function is as follows. This protein binds to 23S rRNA in the presence of protein L20. The protein is Large ribosomal subunit protein bL21 of Aeromonas salmonicida (strain A449).